The following is a 150-amino-acid chain: uncharacterized protein (150 aa).

This is an uncharacterized protein from Streptomyces lincolnensis.